Here is a 282-residue protein sequence, read N- to C-terminus: Acetyl-coenzyme A carboxylase carboxyl transferase subunit beta (282 aa).

The CoA carboxyltransferase N-terminal domain occupies L29–D282. C33, C36, C51, and C54 together coordinate Zn(2+). The segment at C33–C54 adopts a C4-type zinc-finger fold.

Belongs to the AccD/PCCB family. In terms of assembly, acetyl-CoA carboxylase is a heterohexamer composed of biotin carboxyl carrier protein (AccB), biotin carboxylase (AccC) and two subunits each of ACCase subunit alpha (AccA) and ACCase subunit beta (AccD). Zn(2+) serves as cofactor.

It is found in the cytoplasm. The enzyme catalyses N(6)-carboxybiotinyl-L-lysyl-[protein] + acetyl-CoA = N(6)-biotinyl-L-lysyl-[protein] + malonyl-CoA. Its pathway is lipid metabolism; malonyl-CoA biosynthesis; malonyl-CoA from acetyl-CoA: step 1/1. In terms of biological role, component of the acetyl coenzyme A carboxylase (ACC) complex. Biotin carboxylase (BC) catalyzes the carboxylation of biotin on its carrier protein (BCCP) and then the CO(2) group is transferred by the transcarboxylase to acetyl-CoA to form malonyl-CoA. The sequence is that of Acetyl-coenzyme A carboxylase carboxyl transferase subunit beta from Lactobacillus delbrueckii subsp. bulgaricus (strain ATCC 11842 / DSM 20081 / BCRC 10696 / JCM 1002 / NBRC 13953 / NCIMB 11778 / NCTC 12712 / WDCM 00102 / Lb 14).